The chain runs to 274 residues: Large ribosomal subunit protein uL2 (274 aa).

Residues 228-254 are disordered; that stretch reads VDHPMGGGEGRASGGHPRSRKGLYAKG. Positions 244–254 are enriched in basic residues; the sequence is PRSRKGLYAKG.

Belongs to the universal ribosomal protein uL2 family. In terms of assembly, part of the 50S ribosomal subunit. Forms a bridge to the 30S subunit in the 70S ribosome.

Functionally, one of the primary rRNA binding proteins. Required for association of the 30S and 50S subunits to form the 70S ribosome, for tRNA binding and peptide bond formation. It has been suggested to have peptidyltransferase activity; this is somewhat controversial. Makes several contacts with the 16S rRNA in the 70S ribosome. The chain is Large ribosomal subunit protein uL2 from Azobacteroides pseudotrichonymphae genomovar. CFP2.